A 155-amino-acid polypeptide reads, in one-letter code: Transcription antitermination protein NusB (155 aa).

It belongs to the NusB family.

Functionally, involved in transcription antitermination. Required for transcription of ribosomal RNA (rRNA) genes. Binds specifically to the boxA antiterminator sequence of the ribosomal RNA (rrn) operons. This is Transcription antitermination protein NusB from Vibrio parahaemolyticus serotype O3:K6 (strain RIMD 2210633).